Here is a 365-residue protein sequence, read N- to C-terminus: DNA replication and repair protein RecF (365 aa).

30 to 37 (GENGQGKT) contacts ATP.

It belongs to the RecF family.

It localises to the cytoplasm. The RecF protein is involved in DNA metabolism; it is required for DNA replication and normal SOS inducibility. RecF binds preferentially to single-stranded, linear DNA. It also seems to bind ATP. The sequence is that of DNA replication and repair protein RecF from Desulfitobacterium hafniense (strain DSM 10664 / DCB-2).